The primary structure comprises 865 residues: Alanine--tRNA ligase (865 aa).

The Zn(2+) site is built by H554, H558, C656, and H660.

It belongs to the class-II aminoacyl-tRNA synthetase family. It depends on Zn(2+) as a cofactor.

The protein localises to the cytoplasm. It carries out the reaction tRNA(Ala) + L-alanine + ATP = L-alanyl-tRNA(Ala) + AMP + diphosphate. Functionally, catalyzes the attachment of alanine to tRNA(Ala) in a two-step reaction: alanine is first activated by ATP to form Ala-AMP and then transferred to the acceptor end of tRNA(Ala). Also edits incorrectly charged Ser-tRNA(Ala) and Gly-tRNA(Ala) via its editing domain. The sequence is that of Alanine--tRNA ligase from Francisella tularensis subsp. mediasiatica (strain FSC147).